The chain runs to 477 residues: Actin-related protein 7 (477 aa).

This sequence belongs to the actin family. Forms a heterodimer with ARP9. Interacts with NPL6. Component of the two forms of the RSC complex composed of at least either RSC1 or RSC2, and ARP7, ARP9, LDB7, NPL6, RSC3, RSC30, RSC4, RSC58, RSC6, RSC8, RSC9, SFH1, STH1, HTL1 and probably RTT102. The complexes interact with histone and histone variant components of centromeric chromatin. Component of the SWI/SNF global transcription activator complex. The 1.14 MDa SWI/SNF complex is composed of 11 different subunits: one copy each of SWI1, SNF2/SWI2, SNF5, SNF12/SWP73, ARP7/SWP61, ARP9/SWP59; two copies each of SWI3, SNF6, SNF11, SWP82; and three copies of TAF14/SWP29.

Its subcellular location is the nucleus. Its function is as follows. Component of the chromatin structure remodeling complex (RSC), which is involved in transcription regulation and nucleosome positioning. RSC is responsible for the transfer of a histone octamer from a nucleosome core particle to naked DNA. The reaction requires ATP and involves an activated RSC-nucleosome intermediate. Remodeling reaction also involves DNA translocation, DNA twist and conformational change. As a reconfigurer of centromeric and flanking nucleosomes, RSC complex is required both for proper kinetochore function in chromosome segregation and, via a PKC1-dependent signaling pathway, for organization of the cellular cytoskeleton. This subunit is involved in transcriptional regulation. Heterodimer of ARP7 and ARP9 functions with HMG box proteins to facilitate proper chromatin architecture. Heterodimer formation is necessary for assembly into RSC complex. Part of the SWI/SNF complex, an ATP-dependent chromatin remodeling complex, is required for the positive and negative regulation of gene expression of a large number of genes. It changes chromatin structure by altering DNA-histone contacts within a nucleosome, leading eventually to a change in nucleosome position, thus facilitating or repressing binding of gene-specific transcription factors. The chain is Actin-related protein 7 (ARP7) from Saccharomyces cerevisiae (strain ATCC 204508 / S288c) (Baker's yeast).